The chain runs to 300 residues: Ribosomal RNA small subunit methyltransferase H (300 aa).

Residues 46–48, Asp-65, Phe-92, Asp-107, and Gln-114 contribute to the S-adenosyl-L-methionine site; that span reads GGH.

The protein belongs to the methyltransferase superfamily. RsmH family.

Its subcellular location is the cytoplasm. It carries out the reaction cytidine(1402) in 16S rRNA + S-adenosyl-L-methionine = N(4)-methylcytidine(1402) in 16S rRNA + S-adenosyl-L-homocysteine + H(+). Its function is as follows. Specifically methylates the N4 position of cytidine in position 1402 (C1402) of 16S rRNA. This is Ribosomal RNA small subunit methyltransferase H from Prochlorococcus marinus subsp. pastoris (strain CCMP1986 / NIES-2087 / MED4).